Reading from the N-terminus, the 296-residue chain is Claudin-23 (296 aa).

Over 1 to 2 (MR) the chain is Cytoplasmic. Residues 3-23 (TPVVMTLGMVLTPCGLLLNLV) traverse the membrane as a helical segment. Topologically, residues 24 to 81 (STLAPGWRLVKGFLDQPVDVVLYQGLWDICREQSSRERECGQPDEWNYFQTQPVQVAR) are extracellular. A helical transmembrane segment spans residues 82–102 (GLMITSLATTALGLLLASLGV). Residues 103–111 (RCWQDEPHY) are Cytoplasmic-facing. The helical transmembrane segment at 112 to 132 (GLAGLSGVVFFVAGLFSLIPV) threads the bilayer. At 133-160 (SWYNHFLSDPDVLAAPSSPVTVQVSYSL) the chain is on the extracellular side. Residues 161–181 (VLGYLGSCLLLLGGFSLALSF) traverse the membrane as a helical segment. Over 182–296 (APWCEERCRR…QNSLPCDSDL (115 aa)) the chain is Cytoplasmic. Positions 224–296 (YSDGQHRPPP…QNSLPCDSDL (73 aa)) are disordered. The segment covering 273–284 (TSQGGSSSRSTR) has biased composition (low complexity). The span at 285–296 (PCQNSLPCDSDL) shows a compositional bias: polar residues.

It belongs to the claudin family.

It localises to the cell junction. It is found in the tight junction. The protein resides in the cell membrane. In terms of biological role, plays a major role in tight junction-specific obliteration of the intercellular space, through calcium-independent cell-adhesion activity. This is Claudin-23 (Cldn23) from Mus musculus (Mouse).